Here is a 247-residue protein sequence, read N- to C-terminus: Homeobox protein BarH-like 1b (247 aa).

2 disordered regions span residues 118–138 and 197–247; these read RGKL…GRRS and GGGL…SQEE. The homeobox DNA-binding region spans 135-194; sequence GRRSRTVFTELQLMGLEKRFEKQKYLSTPDRIDLAESLGLSQLQVKTWYQNRRMKWKKIV. The segment covering 223–234 has biased composition (basic and acidic residues); it reads EQERARDAEKPP.

The protein belongs to the BAR homeobox family. As to quaternary structure, interacts with serum response factor (SRF). In terms of tissue distribution, expressed in smooth muscle cells of the upper digestive organs and their attached arteries and to craniofacial structures.

It localises to the nucleus. Its function is as follows. Transcription factor which is involved with the serum response factor (SRF) in the smooth muscle cell-specific transcription of the beta-tropomyosin gene in the upper digestive organs and their attached arteries. This Gallus gallus (Chicken) protein is Homeobox protein BarH-like 1b (BARX1B).